Here is a 262-residue protein sequence, read N- to C-terminus: Sulfur carrier protein FdhD (262 aa).

The Cysteine persulfide intermediate role is filled by C107.

It belongs to the FdhD family.

It localises to the cytoplasm. In terms of biological role, required for formate dehydrogenase (FDH) activity. Acts as a sulfur carrier protein that transfers sulfur from IscS to the molybdenum cofactor prior to its insertion into FDH. This chain is Sulfur carrier protein FdhD, found in Bacillus pumilus (strain SAFR-032).